Consider the following 678-residue polypeptide: Growth arrest-specific protein 6 (678 aa).

The signal sequence occupies residues 1-30 (MAPSLSPGPAALRRAPQLLLLLLAAECALA). Residues 53–94 (FEEAKQGHLERECVEELCSREEAREVFENDPETDYFYPRYLD) enclose the Gla domain. C65 and C70 are oxidised to a cystine. S71 bears the Phosphoserine; by FAM20C mark. The 39-residue stretch at 116–154 (LPDQCTPNPCDRKGTQACQDLMGNFFCLCKAGWGGRLCD) folds into the EGF-like 1; calcium-binding domain. Cystine bridges form between C120–C133, C125–C142, C144–C153, C160–C171, C167–C180, C182–C195, C201–C212, C207–C221, C223–C236, C242–C251, C247–C260, C262–C277, C283–C570, and C444–C470. The EGF-like 2; calcium-binding domain maps to 156 to 196 (DVNECSQENGGCLQICHNKPGSFHCSCHSGFELSSDGRTCQ). Residues 197–237 (DIDECADSEACGEARCKNLPGSYSCLCDEGFAYSSQEKACR) form the EGF-like 3; calcium-binding domain. Residues 238-278 (DVDECLQGRCEQVCVNSPGSYTCHCDGRGGLKLSQDMDTCE) form the EGF-like 4; calcium-binding domain. Laminin G-like domains are found at residues 298–470 (GRMF…RMQC) and 477–670 (GSFY…AHSC). The Ca(2+) site is built by D329 and E331. The N-linked (GlcNAc...) asparagine glycan is linked to N420. R440 provides a ligand contact to Ca(2+). Residues T621 and T637 each carry the phosphothreonine modification. At Y640 the chain carries Phosphotyrosine. The cysteines at positions 643 and 670 are disulfide-linked. A Ca(2+)-binding site is contributed by D656.

Heterodimer and heterotetramer with AXL. In terms of processing, proteolytically processed after secretion to yield a N-terminal 36 kDa protein and a C-terminal 50 kDa protein including the laminin G-like domains which activates AXL. Post-translationally, gamma-carboxyglutamate residues are formed by vitamin K dependent carboxylation. These residues are essential for the binding of calcium. In terms of tissue distribution, plasma. Isoform 1 and isoform 2 are widely expressed, isoform 1 being expressed at higher levels than isoform 2 in most tissues. Isoform 2 is the predominant form in spleen.

Its subcellular location is the secreted. Its function is as follows. Ligand for tyrosine-protein kinase receptors AXL, TYRO3 and MER whose signaling is implicated in cell growth and survival, cell adhesion and cell migration. GAS6/AXL signaling plays a role in various processes such as endothelial cell survival during acidification by preventing apoptosis, optimal cytokine signaling during human natural killer cell development, hepatic regeneration, gonadotropin-releasing hormone neuron survival and migration, platelet activation, or regulation of thrombotic responses. Functionally, (Microbial infection) Can bridge virus envelope phosphatidylserine to the TAM receptor tyrosine kinase Axl to mediate viral entry by apoptotic mimicry. Plays a role in Dengue cell entry by apoptotic mimicry. Plays a role in Vaccinia virus cell entry by apoptotic mimicry. Plays a role in ebolavirus and marburgvirus cell entry by apoptotic mimicry. The chain is Growth arrest-specific protein 6 from Homo sapiens (Human).